The primary structure comprises 78 residues: Defensin-like protein 281 (78 aa).

Residues 1 to 23 (MASTKYLVLLFICLSVLLTPGLG) form the signal peptide. Disulfide bonds link Cys37–Cys60, Cys46–Cys72, and Cys50–Cys74.

This sequence belongs to the DEFL family.

It is found in the secreted. The sequence is that of Defensin-like protein 281 from Arabidopsis thaliana (Mouse-ear cress).